Here is a 940-residue protein sequence, read N- to C-terminus: Serine/threonine-protein phosphatase 1 regulatory subunit 10 (940 aa).

Positions 1–348 (MGSGPIDPKE…EPAPPSEAMD (348 aa)) are interaction with TOX4. The TFIIS N-terminal domain maps to 73–147 (KLLNNWLTYS…SDWMAVIRSQ (75 aa)). 4 disordered regions span residues 147 to 211 (QSST…FRST), 247 to 270 (SNVAAPGDATPPAEKKYKPLNTTP), 304 to 400 (KIKK…KSVT), and 533 to 905 (YVET…HGGD). Basic and acidic residues-rich tracts occupy residues 153–166 (AEKDKKKRKDEGKS) and 174–196 (PLTEVKAETRAEEAPEKKREKPK). A Glycyl lysine isopeptide (Lys-Gly) (interchain with G-Cter in SUMO2) cross-link involves residue K179. Residue T256 is modified to Phosphothreonine. A Glycyl lysine isopeptide (Lys-Gly) (interchain with G-Cter in SUMO2) cross-link involves residue K262. Position 313 is a phosphoserine (S313). Low complexity predominate over residues 325-336 (KTSTEPSTAKPS). The tract at residues 357–433 (PPVEVPELMD…NKIKDFGEAA (77 aa)) is necessary for interaction with PPP1CA. S382 is subject to Phosphoserine. The necessary for interaction with PPP1CC stretch occupies residues 393–408 (GRKRKSVTWPEEGKLR). The short motif at 394 to 423 (RKRKSVTWPEEGKLREYFYFELDETERVNV) is the PP1-binding motif element. A Phosphoserine; by PKA modification is found at S398. The tract at residues 418-619 (TERVNVNKIK…IKQMLVPHGL (202 aa)) is interaction with WDR82. 2 stretches are compositionally biased toward gly residues: residues 540–551 (GGSGGSPDGAGG) and 565–579 (MGAGKGPQGPGGGGI). S545 bears the Phosphoserine mark. A compositionally biased stretch (polar residues) spans 583-595 (EILTSIMGSPNSH). A Phosphoserine modification is found at S591. Over residues 596–611 (PSEELLKQPDYSDKIK) the composition is skewed to basic and acidic residues. Residues 644 to 655 (PPGPGGPMPGPH) are compositionally biased toward pro residues. The residue at position 665 (R665) is an Omega-N-methylarginine. Residues 676-690 (GDPFWDGPGDPMRGG) are compositionally biased toward low complexity. An Omega-N-methylarginine modification is found at R693. The span at 714–723 (EPPPPPPPPF) shows a compositional bias: pro residues. Gly residues-rich tracts occupy residues 726–764 (ARGGRSGGGPPNGRGGPGGGMVGGGGHRPHEGPGGGMGN) and 790–845 (SSMG…GSGG). R739 is subject to Omega-N-methylarginine. Composition is skewed to basic and acidic residues over residues 862-886 (PHDVPGHRGHDHRGPPHEHRGHDGP) and 894-903 (RGHDGGHSHG). Residues 906-934 (MSNRPVCRHFMMKGNCRYENNCAFYHPGV) form a C3H1-type zinc finger.

Component of the PNUTS-PP1 complex (also named PTW/PP1 complex), composed of PPP1R10/PNUTS, TOX4, WDR82, and PPP1CA (or PPP1CB or PPP1CC). Phosphorylated on Ser-398 by PKA within the region necessary for interaction with PPP1CA.

The protein localises to the nucleus. It localises to the chromosome. Its function is as follows. Substrate-recognition component of the PNUTS-PP1 protein phosphatase complex, a protein phosphatase 1 (PP1) complex that promotes RNA polymerase II transcription pause-release, allowing transcription elongation. Promoter-proximal pausing by RNA polymerase II is a transcription halt following transcription initiation but prior to elongation, which acts as a checkpoint to control that transcripts are favorably configured for transcriptional elongation. The PNUTS-PP1 complex mediates the release of RNA polymerase II from promoter-proximal region of genes by catalyzing dephosphorylation of proteins involved in transcription, such as AFF4, CDK9, MEPCE, INTS12, NCBP1, POLR2M/GDOWN1 and SUPT6H. The PNUTS-PP1 complex also regulates RNA polymerase II transcription termination by mediating dephosphorylation of SUPT5H in termination zones downstream of poly(A) sites, thereby promoting deceleration of RNA polymerase II transcription. PNUTS-PP1 complex is also involved in the response to replication stress by mediating dephosphorylation of POLR2A at 'Ser-5' of the CTD, promoting RNA polymerase II degradation. The PNUTS-PP1 complex also plays a role in the control of chromatin structure and cell cycle progression during the transition from mitosis into interphase. PNUTS-PP1 complex mediates dephosphorylation of MYC, promoting MYC stability by preventing MYC ubiquitination by the SCF(FBXW7) complex. In addition to acts as a substrate-recognition component, PPP1R10/PNUTS also acts as a nuclear targeting subunit for the PNUTS-PP1 complex. In some context, PPP1R10/PNUTS also acts as an inhibitor of protein phosphatase 1 (PP1) activity by preventing access to substrates, such as RB. The chain is Serine/threonine-protein phosphatase 1 regulatory subunit 10 (PPP1R10) from Macaca mulatta (Rhesus macaque).